The primary structure comprises 1233 residues: uncharacterized protein (1233 aa).

Disordered stretches follow at residues 1-39 (MVES…PSTN), 65-116 (QELS…DAIS), 160-211 (AEGT…TDLS), 250-577 (EKMD…DAPR), 594-825 (DLEV…NSEK), 851-872 (NKEN…NSEK), and 902-955 (EDVE…ENSK). Residues 72–83 (KSSKLKGHKKKN) show a composition bias toward basic residues. Position 180 is a phosphoserine (Ser-180). The span at 183–199 (TRRKKNKKKKTTNRRGR) shows a compositional bias: basic residues. Residues 201–211 (SSNPADTTDLS) are compositionally biased toward polar residues. 2 stretches are compositionally biased toward basic and acidic residues: residues 250–280 (EKMD…ETSS) and 287–300 (NEEK…REEN). Over residues 329–345 (GQASTKDVESESLTKNG) the composition is skewed to polar residues. Basic and acidic residues-rich tracts occupy residues 349-370 (KENE…DRDG) and 379-408 (NQKE…ELSV). A compositionally biased stretch (polar residues) spans 409-422 (NHENNMSHNFNAAG). Phosphoserine is present on Ser-462. Residues 466–478 (EKEEEEEEEEEEN) are compositionally biased toward acidic residues. 5 stretches are compositionally biased toward basic and acidic residues: residues 484-497 (VKKE…EAVR), 508-527 (STSK…EAGE), 594-622 (DLEV…DKIA), 631-672 (EDMK…KTPE), and 684-711 (RPED…DVKP). Ser-523 bears the Phosphoserine mark. Residues 728-739 (QRVQISTEQAET) show a composition bias toward polar residues. Residues 753-783 (FKEEEKPKRFEITQEGDKITGKDTNHEHGEA) are compositionally biased toward basic and acidic residues. Acidic residues predominate over residues 855-868 (EDVEVDTEEDAEVE). Phosphothreonine is present on Thr-861. Composition is skewed to basic and acidic residues over residues 910–920 (SKEDIETKCSE) and 935–948 (EVSK…TKED). The residue at position 975 (Ser-975) is a Phosphoserine. 2 disordered regions span residues 984 to 1071 (LPEL…PKKA) and 1109 to 1128 (KDST…KPQD). A compositionally biased stretch (basic and acidic residues) spans 986–999 (ELEKQDIKDNKGED). A phosphoserine mark is found at Ser-1037 and Ser-1046. 2 stretches are compositionally biased toward basic and acidic residues: residues 1062–1071 (QSTRENPKKA) and 1118–1127 (QSKKNNDKPQ). Residues 1132 to 1233 (TSEIRKLNEK…KLRELIYDTI (102 aa)) enclose the Glutaredoxin domain.

This is an uncharacterized protein from Saccharomyces cerevisiae (strain ATCC 204508 / S288c) (Baker's yeast).